The chain runs to 2290 residues: Autophagy-related protein 2 (2290 aa).

Positions 10-99 (WCKVMLQRYM…MCIEDLQLTF (90 aa)) constitute a Chorein N-terminal domain. Residues 829–1549 (DSMMKSVSAD…PNRDHSAFVV (721 aa)) form a required for epg-6 binding region. Disordered stretches follow at residues 1678–1727 (IGSK…LGDL), 1805–1851 (DDLF…DLTG), 1898–1919 (SETERDSSASPVTSSPIKPARN), and 1967–2003 (EHGNFLDSIDNEDDNEKQKIEEEMEEDEKEEEEERNK). Positions 1681–1692 (KKTTPKTSVSSS) are enriched in low complexity. Positions 1714 to 1723 (RPSPVQPPTP) are enriched in pro residues. Positions 1810-1830 (QSYSSSSSETESESSAPQSSQ) are enriched in low complexity. Positions 1972 to 2011 (LDSIDNEDDNEKQKIEEEMEEDEKEEEEERNKEIQEAVER) form a coiled coil. Residues 1988–1999 (EEMEEDEKEEEE) show a composition bias toward acidic residues.

The protein belongs to the ATG2 family. In terms of assembly, interacts with epg-6; the interaction is direct.

It localises to the preautophagosomal structure membrane. It is found in the lipid droplet. Its subcellular location is the endoplasmic reticulum membrane. The protein localises to the cytoplasm. It catalyses the reaction a 1,2-diacyl-sn-glycero-3-phospho-L-serine(in) = a 1,2-diacyl-sn-glycero-3-phospho-L-serine(out). It carries out the reaction a 1,2-diacyl-sn-glycero-3-phosphoethanolamine(in) = a 1,2-diacyl-sn-glycero-3-phosphoethanolamine(out). Its function is as follows. Lipid transfer protein involved in autophagosome assembly and in the distribution of atg-9 and atg-13 during the autophagy-mediated degradation of protein aggregates. Tethers the edge of the isolation membrane (IM) to the endoplasmic reticulum (ER) and mediates direct lipid transfer from ER to IM for IM expansion. Binds to the ER exit site (ERES), which is the membrane source for autophagosome formation, and extracts phospholipids from the membrane source to the IM for membrane expansion. Involved in autophagy-mediated degradation of ribosomal RNA and ribosomal proteins in lysosomes, which is essential for maintaining nucleotide homeostasis. This chain is Autophagy-related protein 2, found in Caenorhabditis elegans.